Reading from the N-terminus, the 1708-residue chain is 187-kDa microtubule-associated protein AIR9 (1708 aa).

Residues 67–93 (SSLRVSGTTPVTIRRNSTGGVTENLAG) show a composition bias toward polar residues. A disordered region spans residues 67-255 (SSLRVSGTTP…KTSTPESRDS (189 aa)). Basic and acidic residues predominate over residues 110-121 (DPVRRSLPELRK). Low complexity predominate over residues 122 to 134 (SSVSSLSAKTVSK). The span at 149–165 (GSRSLTKSTGFSLSKPE) shows a compositional bias: polar residues. Positions 173–234 (SVSVSSKRAP…SIRSKSFSSP (62 aa)) are enriched in low complexity. LRR repeat units follow at residues 267 to 290 (AGDD…GLHL), 291 to 315 (SPNL…ILNR), 316 to 335 (VKVL…EPLE), 337 to 359 (CKML…LPQL), 360 to 382 (PNLE…SQPR), 384 to 402 (QVLA…FPYL), and 403 to 425 (PVLE…EAAS). A9 repeat units follow at residues 489–584 (PSGY…FAIS), 601–682 (LNGE…QYKY), 698–777 (ITGD…VSTS), 793–878 (IVGD…VYVL), 895–977 (ITGD…RSCM), 994–1073 (VVGA…AISE), 1090–1167 (FLGS…RSIR), 1183–1272 (IPDC…VVVI), 1287–1365 (VRVK…KMSE), 1382–1473 (FTGK…AYAE), and 1489–1569 (IEGQ…VSAS).

In terms of assembly, interacts with KCBP. In terms of tissue distribution, strongly expressed in dividing cells, like the meristemic region of the root tip.

It is found in the cytoplasm. The protein resides in the cell cortex. The protein localises to the cytoskeleton. It localises to the phragmoplast. Functionally, microtubule-associated protein that may be involved in the maturation of cell plates and proper insertion of cross-walls after cytokinesis. The sequence is that of 187-kDa microtubule-associated protein AIR9 from Arabidopsis thaliana (Mouse-ear cress).